A 244-amino-acid polypeptide reads, in one-letter code: Acetoacetate decarboxylase (244 aa).

Lysine 115 serves as the catalytic Schiff-base intermediate with acetoacetate.

This sequence belongs to the ADC family.

It catalyses the reaction acetoacetate + H(+) = acetone + CO2. Functionally, catalyzes the conversion of acetoacetate to acetone and carbon dioxide. This is Acetoacetate decarboxylase from Streptomyces nogalater.